The chain runs to 339 residues: Ketol-acid reductoisomerase (NADP(+)) (339 aa).

The KARI N-terminal Rossmann domain maps to 1–182; that stretch reads MRVYYDRDAD…GGGRSGVIET (182 aa). NADP(+)-binding positions include 24-27, Arg-48, Ser-51, Thr-53, and 83-86; these read YGSQ and DELQ. Residue His-108 is part of the active site. Residue Gly-134 participates in NADP(+) binding. Residues 183-328 enclose the KARI C-terminal knotted domain; sequence TFKEECETDL…EKLRGMMPWI (146 aa). Asp-191, Glu-195, Glu-227, and Glu-231 together coordinate Mg(2+). A substrate-binding site is contributed by Ser-252.

It belongs to the ketol-acid reductoisomerase family. Requires Mg(2+) as cofactor.

The catalysed reaction is (2R)-2,3-dihydroxy-3-methylbutanoate + NADP(+) = (2S)-2-acetolactate + NADPH + H(+). It carries out the reaction (2R,3R)-2,3-dihydroxy-3-methylpentanoate + NADP(+) = (S)-2-ethyl-2-hydroxy-3-oxobutanoate + NADPH + H(+). Its pathway is amino-acid biosynthesis; L-isoleucine biosynthesis; L-isoleucine from 2-oxobutanoate: step 2/4. The protein operates within amino-acid biosynthesis; L-valine biosynthesis; L-valine from pyruvate: step 2/4. Involved in the biosynthesis of branched-chain amino acids (BCAA). Catalyzes an alkyl-migration followed by a ketol-acid reduction of (S)-2-acetolactate (S2AL) to yield (R)-2,3-dihydroxy-isovalerate. In the isomerase reaction, S2AL is rearranged via a Mg-dependent methyl migration to produce 3-hydroxy-3-methyl-2-ketobutyrate (HMKB). In the reductase reaction, this 2-ketoacid undergoes a metal-dependent reduction by NADPH to yield (R)-2,3-dihydroxy-isovalerate. The sequence is that of Ketol-acid reductoisomerase (NADP(+)) from Brucella anthropi (strain ATCC 49188 / DSM 6882 / CCUG 24695 / JCM 21032 / LMG 3331 / NBRC 15819 / NCTC 12168 / Alc 37) (Ochrobactrum anthropi).